The chain runs to 207 residues: Large ribosomal subunit protein uL4 (207 aa).

Positions 50 to 75 (KTKTVSEVSGTTKKPFKQKGTGNARQ) are disordered.

The protein belongs to the universal ribosomal protein uL4 family. Part of the 50S ribosomal subunit.

One of the primary rRNA binding proteins, this protein initially binds near the 5'-end of the 23S rRNA. It is important during the early stages of 50S assembly. It makes multiple contacts with different domains of the 23S rRNA in the assembled 50S subunit and ribosome. Functionally, forms part of the polypeptide exit tunnel. The chain is Large ribosomal subunit protein uL4 from Rickettsia akari (strain Hartford).